Here is a 544-residue protein sequence, read N- to C-terminus: Phosphomannomutase (544 aa).

The active-site Phosphoserine intermediate is the Ser145. Positions 145, 297, 299, and 301 each coordinate Mg(2+).

It belongs to the phosphohexose mutase family. The cofactor is Mg(2+).

The catalysed reaction is alpha-D-mannose 1-phosphate = D-mannose 6-phosphate. The protein is Phosphomannomutase (manB) of Mycoplasmoides pirum (Mycoplasma pirum).